A 610-amino-acid chain; its full sequence is MIKKIIHRPKRSLFVFKKEESLLYGPRVKSAPPIEISFEPPAKIEPKLAVRFTRADGTPIRKEDLLDSTDSEILSESSVESETEVENIPQEADTGNTREESEECQREAGAEEEPRPALEDRALMLDNLLKRFSEQKIAENRGPCYSVDEILSVEDRKAISLELKIKTRKEAKGVYRPDNNRKDTCIEQARLEFNRLTAKNIGLVIKNLKAIRVGTIEEMKEIAKILFDKAISEPTFVKYYALLVLDLKKEWQSEEEKTRDITQTVFFGTLLTLTLKTLENKERWGDEYERRKEMSFEERMAYEEKLEEAETERYIKKRRTLGTIDFLSSLYSLNVISYVHMNACINTLMKLDDSENVEVLCYLIENIGEKLVVSGKEHIISMVCSSLAQKKNSYTNRIRYMIESLLDKRSSWKPREAKAGNVFSCLEVENDYGNAQNQGSQESPSEDVLPFLSSLSEELSVAYEDDDKELLSDSLQSGESKFGVIPFYLSYFQEAISNHKVSDLLSDFFISFRSTSSITEEQLREVLLSLKGDLDVLKIDFPISPKKYSELITKLRASKVISQPLFEELKTSDYNSRATDIILRWYKSDRDREKALTIFPSEAIENLIRK.

Positions 59–118 are disordered; sequence PIRKEDLLDSTDSEILSESSVESETEVENIPQEADTGNTREESEECQREAGAEEEPRPAL. Basic and acidic residues predominate over residues 96–118; the sequence is NTREESEECQREAGAEEEPRPAL. The MIF4G domain occupies 175-414; it reads YRPDNNRKDT…LLDKRSSWKP (240 aa).

It belongs to the eukaryotic initiation factor 4G family. As to quaternary structure, component of the eIF4F complex, which composition varies with external and internal environmental conditions.

The protein localises to the cytoplasm. In terms of biological role, component of the protein complex eIF4F, which is involved in the recognition of the mRNA cap, ATP-dependent unwinding of 5'-terminal secondary structure and recruitment of mRNA to the ribosome. The protein is Probable eukaryotic translation initiation factor 4 gamma homolog (EIF4G) of Encephalitozoon cuniculi (strain GB-M1) (Microsporidian parasite).